A 406-amino-acid polypeptide reads, in one-letter code: MGNTTSEIQTQNVEAQPLISTEEQLSVDNPSIQSDQSVDTVENTVNDTVNDTVENTVNDTVQSIINKKYVHPVIDLINSNQSENEIIEVLKSFVGTNVVGTNENGQTIYDCVDQVELFGPAMQVFCHCACYGKKDVTDWILKNYVPLQVSYGDNFTFFETQKYKHFDISDMLVKHESFVPSYEVMQNLLSRSKYDLLEHCLNNPNLEKSHIDHYNLFIQYLSNKQYSNINELLVSLKKDSNTPIVSGNESETQPLQVTEIVNVNDNVTLDEISYSEIVTDTLPQNVESGIQLESTTEVKPESTTEVKPESTSEVQPESTTEFQPESTTVVEPESTTKVEPESTTEFQPESTTEVEPESTTEPQVESTTEFQPESSTEPQVESTVEVQAESMNESSYFQYNKPTYDI.

Gly2 is lipidated: N-myristoyl glycine; by host. The interval 291–406 (QLESTTEVKP…FQYNKPTYDI (116 aa)) is disordered. Residues 296 to 310 (TEVKPESTTEVKPES) show a composition bias toward basic and acidic residues. Residues 311–323 (TSEVQPESTTEFQ) show a composition bias toward polar residues. Low complexity-rich tracts occupy residues 324 to 333 (PESTTVVEPE), 341 to 351 (ESTTEFQPEST), and 359 to 369 (TTEPQVESTTE). Over residues 370 to 406 (FQPESSTEPQVESTVEVQAESMNESSYFQYNKPTYDI) the composition is skewed to polar residues.

This is an uncharacterized protein from Acanthamoeba polyphaga (Amoeba).